Here is a 238-residue protein sequence, read N- to C-terminus: Calmodulin-binding protein 25 (238 aa).

Positions 68-78 (STNTLSSTVSG) are enriched in polar residues. The interval 68–87 (STNTLSSTVSGASDPEIIGG) is disordered. A Bipartite nuclear localization signal motif is present at residues 92-108 (KRNCLLTDGKAAKRRAR). Residues 125-134 (FRQMVQQVTG) carry the VQ motif. The tract at residues 201–220 (SSVGLPSGKPSATADPGGSA) is disordered.

As to quaternary structure, interacts with calmodulin (CaM). Interacts with WRKY25 and WRKY51. As to expression, expressed in leaves, flowers and siliques.

The protein localises to the nucleus. Calmodulin-binding protein that functions as a negative regulator of osmotic stress tolerance. The polypeptide is Calmodulin-binding protein 25 (Arabidopsis thaliana (Mouse-ear cress)).